The chain runs to 884 residues: Probable disease resistance protein At1g12290 (884 aa).

Positions 26-66 (LYYIQNIKENLTSLEEAMEDLKALRDDLLRKVQTAEEGGLQ) form a coiled coil. An NB-ARC domain is found at 139 to 443 (AHPATRAVGE…CEGFIDGDEN (305 aa)). 182–189 (GMGGVGKT) lines the ATP pocket. LRR repeat units lie at residues 519 to 540 (VVSR…PECP), 541 to 563 (KLTT…FFRS), 566 to 588 (RLVV…ISEL), 590 to 612 (SLRY…LKLK), 613 to 635 (KLMH…DHLS), and 644 to 664 (NLRM…ENLE).

Belongs to the disease resistance NB-LRR family.

Probable disease resistance protein. The polypeptide is Probable disease resistance protein At1g12290 (Arabidopsis thaliana (Mouse-ear cress)).